The primary structure comprises 267 residues: Outer membrane protein assembly factor BamD (267 aa).

The signal sequence occupies residues 1–16 (MKKILLTVSLGLALSA). Cysteine 17 carries N-palmitoyl cysteine lipidation. Cysteine 17 is lipidated: S-diacylglycerol cysteine.

This sequence belongs to the BamD family. Part of the Bam complex.

Its subcellular location is the cell outer membrane. Functionally, part of the outer membrane protein assembly complex, which is involved in assembly and insertion of beta-barrel proteins into the outer membrane. Required for efficient transformation of Neisseria gonorrhoeae by species-related DNA. This chain is Outer membrane protein assembly factor BamD, found in Neisseria gonorrhoeae.